The sequence spans 389 residues: S-adenosylmethionine synthase (389 aa).

Position 17 (His-17) interacts with ATP. Asp-19 contacts Mg(2+). Glu-45 is a binding site for K(+). The L-methionine site is built by Glu-58 and Gln-101. The segment at 101–111 (QSPDISQGVTE) is flexible loop. ATP-binding positions include 168 to 170 (DSK), 234 to 235 (RF), Asp-243, 249 to 250 (RK), Ala-266, and Lys-270. Asp-243 is an L-methionine binding site. Lys-274 is an L-methionine binding site.

The protein belongs to the AdoMet synthase family. In terms of assembly, homotetramer; dimer of dimers. Mg(2+) is required as a cofactor. It depends on K(+) as a cofactor.

Its subcellular location is the cytoplasm. It carries out the reaction L-methionine + ATP + H2O = S-adenosyl-L-methionine + phosphate + diphosphate. It functions in the pathway amino-acid biosynthesis; S-adenosyl-L-methionine biosynthesis; S-adenosyl-L-methionine from L-methionine: step 1/1. In terms of biological role, catalyzes the formation of S-adenosylmethionine (AdoMet) from methionine and ATP. The overall synthetic reaction is composed of two sequential steps, AdoMet formation and the subsequent tripolyphosphate hydrolysis which occurs prior to release of AdoMet from the enzyme. The chain is S-adenosylmethionine synthase from Geobacter metallireducens (strain ATCC 53774 / DSM 7210 / GS-15).